The sequence spans 359 residues: Serpentine receptor class epsilon-13 (359 aa).

Helical transmembrane passes span 33 to 53 (YLFV…YYLL), 74 to 94 (AIYL…ILLI), 111 to 131 (ISLF…AFVA), 150 to 170 (WLVG…ALDF), 180 to 200 (VTIF…NFLL), 237 to 257 (LALS…IDNL), and 266 to 286 (LNTV…PFVI).

It belongs to the nematode receptor-like protein sre family.

Its subcellular location is the membrane. This Caenorhabditis elegans protein is Serpentine receptor class epsilon-13 (sre-13).